Here is a 281-residue protein sequence, read N- to C-terminus: Urease accessory protein UreD 2 (281 aa).

This sequence belongs to the UreD family. UreD, UreF and UreG form a complex that acts as a GTP-hydrolysis-dependent molecular chaperone, activating the urease apoprotein by helping to assemble the nickel containing metallocenter of UreC. The UreE protein probably delivers the nickel.

It localises to the cytoplasm. Its function is as follows. Required for maturation of urease via the functional incorporation of the urease nickel metallocenter. The polypeptide is Urease accessory protein UreD 2 (Pseudomonas syringae pv. syringae (strain B728a)).